Reading from the N-terminus, the 169-residue chain is Cell cycle link protein (169 aa).

A binding to host SKP1 protein region spans residues 9–22 (LPLELREKIVRDHL). An LXCXE motif, interaction with host RBR motif is present at residues 110–114 (LSCGE).

Belongs to the nanovirus Clink protein family. In terms of assembly, interacts with host SKP1. Interacts (via LXCXE domain) with host retinoblastoma-related protein 1 (RBR1). Interacts (via LXCXE domain) with retinoblastoma-related proteins (RBR).

Its function is as follows. Interacts with and disrupts the function of host retinoblastoma-related proteins RBR, which are key regulators of the cell cycle. Induces transcriptional activation of E2F-regulated S-phase and G2/M-phase-specific genes. Inactivation of the ability of RBR to arrest the cell cycle leads to the stimulation of viral DNA replication. The protein is Cell cycle link protein (DNA-C) of Astragalus sinicus (Chinese milk vetch).